We begin with the raw amino-acid sequence, 152 residues long: Glutamyl-tRNA(Gln) amidotransferase subunit F, mitochondrial (152 aa).

Belongs to the GatF family. In terms of assembly, subunit of the heterotrimeric GatFAB amidotransferase (AdT) complex, composed of A, B and F subunits.

Its subcellular location is the mitochondrion inner membrane. The catalysed reaction is L-glutamyl-tRNA(Gln) + L-glutamine + ATP + H2O = L-glutaminyl-tRNA(Gln) + L-glutamate + ADP + phosphate + H(+). Functionally, allows the formation of correctly charged Gln-tRNA(Gln) through the transamidation of misacylated Glu-tRNA(Gln) in the mitochondria. The reaction takes place in the presence of glutamine and ATP through an activated gamma-phospho-Glu-tRNA(Gln). Required for proper protein synthesis within the mitochondrion. This chain is Glutamyl-tRNA(Gln) amidotransferase subunit F, mitochondrial, found in Komagataella phaffii (strain GS115 / ATCC 20864) (Yeast).